The chain runs to 84 residues: Putative membrane protein insertion efficiency factor (84 aa).

Belongs to the UPF0161 family.

It localises to the cell inner membrane. In terms of biological role, could be involved in insertion of integral membrane proteins into the membrane. This Shewanella pealeana (strain ATCC 700345 / ANG-SQ1) protein is Putative membrane protein insertion efficiency factor.